The following is a 281-amino-acid chain: Pantothenate synthetase (281 aa).

M31 to H38 contributes to the ATP binding site. H38 (proton donor) is an active-site residue. Residue Q62 participates in (R)-pantoate binding. Q62 contacts beta-alanine. Position 150 to 153 (G150 to D153) interacts with ATP. Residue Q156 participates in (R)-pantoate binding. ATP is bound by residues V179 and M187–R190.

Belongs to the pantothenate synthetase family. Homodimer.

Its subcellular location is the cytoplasm. It catalyses the reaction (R)-pantoate + beta-alanine + ATP = (R)-pantothenate + AMP + diphosphate + H(+). Its pathway is cofactor biosynthesis; (R)-pantothenate biosynthesis; (R)-pantothenate from (R)-pantoate and beta-alanine: step 1/1. Functionally, catalyzes the condensation of pantoate with beta-alanine in an ATP-dependent reaction via a pantoyl-adenylate intermediate. In Xylella fastidiosa (strain 9a5c), this protein is Pantothenate synthetase.